The chain runs to 189 residues: Protein GrpE (189 aa).

Over residues 1–12 (MDKKKHGSHAGA) the composition is skewed to basic residues. The interval 1–36 (MDKKKHGSHAGAHHTDEPAAETVAPAAEGAPAAADR) is disordered. The span at 20–34 (AETVAPAAEGAPAAA) shows a compositional bias: low complexity.

It belongs to the GrpE family. In terms of assembly, homodimer.

It localises to the cytoplasm. In terms of biological role, participates actively in the response to hyperosmotic and heat shock by preventing the aggregation of stress-denatured proteins, in association with DnaK and GrpE. It is the nucleotide exchange factor for DnaK and may function as a thermosensor. Unfolded proteins bind initially to DnaJ; upon interaction with the DnaJ-bound protein, DnaK hydrolyzes its bound ATP, resulting in the formation of a stable complex. GrpE releases ADP from DnaK; ATP binding to DnaK triggers the release of the substrate protein, thus completing the reaction cycle. Several rounds of ATP-dependent interactions between DnaJ, DnaK and GrpE are required for fully efficient folding. This is Protein GrpE from Geobacter metallireducens (strain ATCC 53774 / DSM 7210 / GS-15).